Consider the following 644-residue polypeptide: Mitochondrial 15S rRNA processing factor CCM1 (644 aa).

The N-terminal 38 residues, 1 to 38 (MVIVASSNMLRPDRIWLCGKYQTARTLYVVGNKSKRRN), are a transit peptide targeting the mitochondrion. The disordered stretch occupies residues 78 to 108 (ISKKSEKEVERSQIQSTEPSPETSTQLTQKN). Positions 89–108 (SQIQSTEPSPETSTQLTQKN) are enriched in polar residues. PPR repeat units lie at residues 245-279 (PRET…GLQP), 280-315 (SKNT…SDKT), and 318-352 (AERA…KVEV).

This sequence belongs to the CCM1 family. In terms of assembly, binds to mitochondrial small subunit 15S rRNA.

It is found in the mitochondrion. In terms of biological role, regulates mitochondrial small subunit maturation by controlling 15S rRNA 5'-end processing. Localizes to the 5' precursor of the 15S rRNA in a position that is subsequently occupied by mS47 in the mature yeast mtSSU. Uses structure and sequence-specific RNA recognition, binding to a single-stranded region of the precursor and specifically recognizing bases -6 to -1. The exchange of Ccm1 for mS47 is coupled to the irreversible removal of precursor rRNA that is accompanied by conformational changes of the mitoribosomal proteins uS5m and mS26. These conformational changes signal completion of 5'-end rRNA processing through protection of the mature 5'-end of the 15S rRNA and stabilization of mS47. The removal of the 5' precursor together with the dissociation of Ccm1 may be catalyzed by the 5'-3' exoribonuclease Pet127. Involved in the specific removal of group I introns in mitochondrial encoded transcripts. This Meyerozyma guilliermondii (strain ATCC 6260 / CBS 566 / DSM 6381 / JCM 1539 / NBRC 10279 / NRRL Y-324) (Yeast) protein is Mitochondrial 15S rRNA processing factor CCM1 (CCM1).